The following is an 899-amino-acid chain: Bifunctional uridylyltransferase/uridylyl-removing enzyme (899 aa).

The segment at 1-342 (MPQVDPDLFD…PGDAAGRVEP (342 aa)) is uridylyltransferase. The uridylyl-removing stretch occupies residues 343-705 (LNERFQVRDG…TTQREFEGAT (363 aa)). The HD domain maps to 461 to 583 (VDAHTLNLIK…VRDQTYLDYL (123 aa)). ACT domains are found at residues 706-789 (QIFI…IIQR) and 816-899 (ILEI…RISI).

Belongs to the GlnD family. Requires Mg(2+) as cofactor.

The enzyme catalyses [protein-PII]-L-tyrosine + UTP = [protein-PII]-uridylyl-L-tyrosine + diphosphate. The catalysed reaction is [protein-PII]-uridylyl-L-tyrosine + H2O = [protein-PII]-L-tyrosine + UMP + H(+). Its activity is regulated as follows. Uridylyltransferase (UTase) activity is inhibited by glutamine, while glutamine activates uridylyl-removing (UR) activity. Its function is as follows. Modifies, by uridylylation and deuridylylation, the PII regulatory proteins (GlnB and homologs), in response to the nitrogen status of the cell that GlnD senses through the glutamine level. Under low glutamine levels, catalyzes the conversion of the PII proteins and UTP to PII-UMP and PPi, while under higher glutamine levels, GlnD hydrolyzes PII-UMP to PII and UMP (deuridylylation). Thus, controls uridylylation state and activity of the PII proteins, and plays an important role in the regulation of nitrogen fixation and metabolism. The chain is Bifunctional uridylyltransferase/uridylyl-removing enzyme from Azotobacter vinelandii (strain DJ / ATCC BAA-1303).